A 264-amino-acid chain; its full sequence is Tropomyosin Cha f 1.0101 (264 aa).

Methionine 1 bears the N-acetylmethionine mark. Disordered regions lie at residues 1–56 and 92–126; these read MDAI…VENE and IQLP…SERM. Positions 1–264 form a coiled coil; it reads MDAIKKKMQA…RLEDELVNEK (264 aa). Residues 12 to 45 are compositionally biased toward basic and acidic residues; the sequence is KLEKDNAMDRADTLEQQNKEANLRAEKTEEEIRA.

The protein belongs to the tropomyosin family. Homodimer. Expressed in muscle (at protein level). Expressed in claw muscles.

Functionally, tropomyosin, in association with the troponin complex, plays a central role in the calcium dependent regulation of muscle contraction. This Charybdis feriata (Crucifix crab) protein is Tropomyosin Cha f 1.0101.